A 141-amino-acid chain; its full sequence is Endoribonuclease YbeY (141 aa).

Zn(2+)-binding residues include histidine 105, histidine 109, and aspartate 115.

Belongs to the endoribonuclease YbeY family. Zn(2+) is required as a cofactor.

The protein localises to the cytoplasm. Its function is as follows. Single strand-specific metallo-endoribonuclease involved in late-stage 70S ribosome quality control and in maturation of the 3' terminus of the 16S rRNA. The polypeptide is Endoribonuclease YbeY (Karelsulcia muelleri (strain GWSS) (Sulcia muelleri)).